A 342-amino-acid chain; its full sequence is Alpha-(1,3)-fucosyltransferase 7 (342 aa).

Topologically, residues Met1–Ser11 are cytoplasmic. A helical; Signal-anchor for type II membrane protein transmembrane segment spans residues Leu12–Trp31. At Arg32–Ala342 the chain is on the extracellular side. Cys68 and Cys76 form a disulfide bridge. Asn81 carries an N-linked (GlcNAc...) asparagine glycan. A disulfide bond links Cys211 and Cys214. Asn291 is a glycosylation site (N-linked (GlcNAc...) asparagine). A disulfide bridge connects residues Cys318 and Cys321.

It belongs to the glycosyltransferase 10 family. In terms of processing, N-glycosylated. In terms of tissue distribution, expressed in thymus, spleen, liver and lung. Highly expressed in the thymus and lower expressed in the lung.

It is found in the membrane. The enzyme catalyses an N-acetyl-alpha-neuraminyl-(2-&gt;3)-beta-D-galactosyl-(1-&gt;4)-N-acetyl-beta-D-glucosaminyl derivative + GDP-beta-L-fucose = an alpha-Neu5Ac-(2-&gt;3)-beta-D-Gal-(1-&gt;4)-[alpha-L-Fuc-(1-&gt;3)]-beta-D-GlcNAc derivative + GDP + H(+). It catalyses the reaction a neolactoside IV(3)-alpha-NeuAc-nLc4Cer + GDP-beta-L-fucose = a neolactoside IV(3)-alpha-NeuNAc,III(3)-alpha-Fuc-nLc4Cer + GDP + H(+). It carries out the reaction a neolactoside VI(3)-alpha-NeuNAc-nLc6Cer + GDP-beta-L-fucose = a neolactoside VI(3)-alpha-NeuAc,V(3)-alphaFuc-nLc6Cer + GDP + H(+). The catalysed reaction is an alpha-Neu5Ac-(2-&gt;3)-beta-D-Gal-(1-&gt;4)-beta-D-GlcNAc-(1-&gt;3)-beta-D-Gal-(1-&gt;4)-[alpha-L-Fuc-(1-&gt;3)]-beta-D-GlcNAc derivative + GDP-beta-L-fucose = an alpha-Neu5Ac-(2-&gt;3)-beta-D-Gal-(1-&gt;4)-[alpha-L-Fuc-(1-&gt;3)]-beta-D-GlcNAc-(1-&gt;3)-beta-D-Gal-(1-&gt;4)-[alpha-L-Fuc-(1-&gt;3)]-beta-D-GlcNAc derivative + GDP + H(+). The enzyme catalyses an alpha-Neu5Ac-(2-&gt;3)-beta-D-Gal-(1-&gt;4)-beta-D-GlcNAc6S derivative + GDP-beta-L-fucose = an alpha-Neu5Ac-(2-&gt;3)-beta-D-Gal-(1-&gt;4)-[alpha-L-Fuc-(1-&gt;3)]-beta-D-GlcNAc6S derivative + GDP + H(+). It catalyses the reaction alpha-Neu5Ac-(2-&gt;3)-beta-D-Gal-(1-&gt;4)-beta-D-GlcNAc-(1-&gt;3)-beta-D-Gal-(1-&gt;4)-D-Glc + GDP-beta-L-fucose = alpha-Neu5Ac-(2-&gt;3)-beta-D-Gal-(1-&gt;4)-[alpha-L-Fuc-(1-&gt;3)]-beta-D-GlcNAc-(1-&gt;3)-beta-D-Gal-(1-&gt;4)-D-Glc + GDP + H(+). It carries out the reaction alpha-Neu5Ac-(2-&gt;3)-beta-D-Gal-(1-&gt;4)-beta-D-GlcNAc-(1-&gt;3)-beta-D-Gal-(1-&gt;4)-[alpha-L-Fuc-(1-&gt;3)]-beta-D-GlcNAc-(1-&gt;3)-beta-D-Gal-(1-&gt;4)-beta-D-GlcNAc + GDP-beta-L-fucose = alpha-Neu5Ac-(2-&gt;3)-beta-D-Gal-(1-&gt;4)-[alpha-L-Fuc-(1-&gt;3)]-beta-D-GlcNAc-(1-&gt;3)-beta-D-Gal-(1-&gt;4)-[alpha-L-Fuc-(1-&gt;3)]-beta-D-GlcNAc-(1-&gt;3)-beta-D-Gal-(1-&gt;4)-beta-D-GlcNAc + GDP + H(+). The catalysed reaction is alpha-Neu5Ac-(2-&gt;3)-beta-D-Gal-(1-&gt;4)-beta-D-GlcNAc-(1-&gt;3)-beta-D-Gal-(1-&gt;4)-beta-D-GlcNAc-(1-&gt;3)-beta-D-Gal-(1-&gt;4)-beta-D-GlcNAc + GDP-beta-L-fucose = alpha-Neu5Ac-(2-&gt;3)-beta-D-Gal-(1-&gt;4)-[alpha-L-Fuc-(1-&gt;3)]-beta-D-GlcNAc-(1-&gt;3)-beta-D-Gal-(1-&gt;4)-beta-D-GlcNAc-(1-&gt;3)-beta-D-Gal-(1-&gt;4)-beta-D-GlcNAc + GDP + H(+). It functions in the pathway protein modification; protein glycosylation. Inhibited by NaCl. Inhibited by GDP in a concentration dependent manner, with an IC(50) value of 93 uM. Also inhibited by GMP and GTP. Inhibited by N-ethylmaleimide. Activated by poly(ethylene glycol) by enhancing the thermal stability of FUT7. Activated by Mn2+, Ca2+, and Mg2+. Both panosialin A and B inhibit activity with IC(50) values of 4.8 and 5.3 ug/ml, respectively. Inhibited by gallic acid (GA) and (-)-epigallocatechin gallate (EGCG) in a time-dependent and irreversible manner with IC(50) values of 60 and 700 nM, respectively. Its function is as follows. Catalyzes the transfer of L-fucose, from a guanosine diphosphate-beta-L-fucose, to the N-acetyl glucosamine (GlcNAc) of a distal alpha2,3 sialylated lactosamine unit of a glycoprotein or a glycolipid-linked sialopolylactosamines chain through an alpha-1,3 glycosidic linkage and participates in the final fucosylation step in the biosynthesis of the sialyl Lewis X (sLe(x)), a carbohydrate involved in cell and matrix adhesion during leukocyte trafficking and fertilization. In vitro, also synthesizes sialyl-dimeric-Lex structures, from VIM-2 structures and both di-fucosylated and trifucosylated structures from mono-fucosylated precursors. However does not catalyze alpha 1-3 fucosylation when an internal alpha 1-3 fucosylation is present in polylactosamine chain and the fucosylation rate of the internal GlcNAc residues is reduced once fucose has been added to the distal GlcNAc. Also catalyzes the transfer of a fucose from GDP-beta-fucose to the 6-sulfated a(2,3)sialylated substrate to produce 6-sulfo sLex mediating significant L-selectin-dependent cell adhesion. Through sialyl-Lewis(x) biosynthesis, can control SELE- and SELP-mediated cell adhesion with leukocytes and allows leukocytes tethering and rolling along the endothelial tissue thereby enabling the leukocytes to accumulate at a site of inflammation. May enhance embryo implantation through sialyl Lewis X (sLeX)-mediated adhesion of embryo cells to endometrium. May affect insulin signaling by up-regulating the phosphorylation and expression of some signaling molecules involved in the insulin-signaling pathway through SLe(x) which is present on the glycans of the INSRR alpha subunit. This Bos taurus (Bovine) protein is Alpha-(1,3)-fucosyltransferase 7.